The sequence spans 466 residues: UDP-N-acetylmuramoylalanine--D-glutamate ligase (466 aa).

128 to 134 (GTNGKST) is an ATP binding site.

It belongs to the MurCDEF family.

It localises to the cytoplasm. The enzyme catalyses UDP-N-acetyl-alpha-D-muramoyl-L-alanine + D-glutamate + ATP = UDP-N-acetyl-alpha-D-muramoyl-L-alanyl-D-glutamate + ADP + phosphate + H(+). Its pathway is cell wall biogenesis; peptidoglycan biosynthesis. Functionally, cell wall formation. Catalyzes the addition of glutamate to the nucleotide precursor UDP-N-acetylmuramoyl-L-alanine (UMA). This Bartonella henselae (strain ATCC 49882 / DSM 28221 / CCUG 30454 / Houston 1) (Rochalimaea henselae) protein is UDP-N-acetylmuramoylalanine--D-glutamate ligase.